The following is a 633-amino-acid chain: Laccase ARB_05828 (633 aa).

The signal sequence occupies residues 1 to 16 (MKRLGLAALYIGSALA). Positions 22-47 (GPPSRNVPRDDFPMFNPLPSTDLNTR) are excised as a propeptide. N-linked (GlcNAc...) asparagine glycosylation occurs at Asn143. Residues His148, His150, His192, and His194 each contribute to the Cu cation site. A disulfide bond links Cys169 and Cys607. A Plastocyanin-like domain is found at 224–353 (LLMTDHLHSS…GRYWVRTTPA (130 aa)). 2 N-linked (GlcNAc...) asparagine glycosylation sites follow: Asn286 and Asn456. His508, His511, His513, His568, Cys569, His570, and His574 together coordinate Cu cation.

It belongs to the multicopper oxidase family. In terms of assembly, monomer. The cofactor is Cu cation.

The protein localises to the secreted. The catalysed reaction is 4 hydroquinone + O2 = 4 benzosemiquinone + 2 H2O. This Arthroderma benhamiae (strain ATCC MYA-4681 / CBS 112371) (Trichophyton mentagrophytes) protein is Laccase ARB_05828.